Here is a 225-residue protein sequence, read N- to C-terminus: Large ribosomal subunit protein bL25 (225 aa).

Residues 188 to 225 (EEIEEAEAEAQATDADTATDDSEQTSEEQAEENKEDKE) form a disordered region. A compositionally biased stretch (acidic residues) spans 204 to 217 (TATDDSEQTSEEQA).

Belongs to the bacterial ribosomal protein bL25 family. CTC subfamily. As to quaternary structure, part of the 50S ribosomal subunit; part of the 5S rRNA/L5/L18/L25 subcomplex. Contacts the 5S rRNA. Binds to the 5S rRNA independently of L5 and L18.

In terms of biological role, this is one of the proteins that binds to the 5S RNA in the ribosome where it forms part of the central protuberance. The protein is Large ribosomal subunit protein bL25 of Exiguobacterium sibiricum (strain DSM 17290 / CCUG 55495 / CIP 109462 / JCM 13490 / 255-15).